The chain runs to 556 residues: Amidophosphoribosyltransferase (556 aa).

Residues 1 to 57 (MCLAVGVGVRAPKHVPQIRRLGRAGRRLRCVTNCALGSCPIVTVQQPGRDFSSPREE) constitute a propeptide that is removed on maturation. Cys-58 (nucleophile) is an active-site residue. Residues 58-284 (CGVFGVWAPG…PGELLAIDAD (227 aa)) form the Glutamine amidotransferase type-2 domain. Residue Cys-299 participates in [4Fe-4S] cluster binding. Mg(2+) contacts are provided by Ser-346, Asp-408, and Asp-409. 3 residues coordinate [4Fe-4S] cluster: Cys-445, Cys-501, and Cys-504.

The protein in the C-terminal section; belongs to the purine/pyrimidine phosphoribosyltransferase family. Requires Mg(2+) as cofactor. It depends on [4Fe-4S] cluster as a cofactor.

It carries out the reaction 5-phospho-beta-D-ribosylamine + L-glutamate + diphosphate = 5-phospho-alpha-D-ribose 1-diphosphate + L-glutamine + H2O. Its pathway is purine metabolism; IMP biosynthesis via de novo pathway; N(1)-(5-phospho-D-ribosyl)glycinamide from 5-phospho-alpha-D-ribose 1-diphosphate: step 1/2. Its function is as follows. Catalyzes the formation of phosphoribosylamine from phosphoribosylpyrophosphate (PRPP) and glutamine. The polypeptide is Amidophosphoribosyltransferase (Mycobacterium leprae (strain TN)).